A 414-amino-acid polypeptide reads, in one-letter code: Carboxynorspermidine synthase (414 aa).

It belongs to the saccharopine dehydrogenase family. Carboxynorspermidine synthase subfamily. Homodimer.

It catalyses the reaction carboxynorspermidine + NADP(+) + H2O = L-aspartate 4-semialdehyde + propane-1,3-diamine + NADPH + H(+). The enzyme catalyses carboxyspermidine + NADP(+) + H2O = L-aspartate 4-semialdehyde + putrescine + NADPH + H(+). With respect to regulation, activated by dithiothreitol and inhibited by SH-reactive compounds. Its function is as follows. Involved in norspermidine biosynthesis. Catalyzes the synthesis of carboxynorspermidine from L-aspartate 4-semialdehyde and 1,3-diaminopropane. Is also slightly active with putrescine as a substrate. This chain is Carboxynorspermidine synthase, found in Vibrio alginolyticus (strain ATCC 17749 / DSM 2171 / NBRC 15630 / NCIMB 1903 / NCTC 12160 / XII-53).